The chain runs to 2185 residues: MGAQVSTQKTGAHETSLSAAGNSVIHYTNINYYKDAASNSANRQDFTQDPGKFTEPVKDIMVKSMPALNSPSAEECGYSDRVRSITLGNSTITTQECANVVVGYGVWPTYLKDEEATAEDQPTQPDVATCRFYTLESVMWQQSSPGWWWKFPDALSNMGLFGQNMQYHYLGRAGYTIHVQCNASKFHQGCLLVVCVPEAEMGCATLANKPDPKSLSKGEIANMFESQNSTGETAVQANVINAGMGVGVGNLTIFPHQWINLRTNNSATIVMPYINSVPMDNMFRHNNFTLMVIPFAPLSYSTGATTYVPITVTVAPMCAEYNGLRLAGKQGLPTLSTPGSNQFLTSDDFQSPSAMPQFDVTPEMDIPGQVNNLMEIAEVDSVVPVNNTEGKVMSIEAYQIPVQSNPTNGSQVFGFPLTPGANSVLNRTLLGEILNYYAHWSGSIKLTFMFCGSAMATGKFLLAYSPPGAGAPTTRKEAMLGTHVIWDVGLQSSCVLCIPWISQTHYRYVVMDEYTAGGYITCWYQTNIVVPADAQSDCKILCFASACNDFSVRMLKDTPFIKQDNFFQGPPGEVVERAIARVADTIGSGPVNSESIPALTAAETGHTSQVVPSDTMQTRHVKNYHSRSESTVENFLCRSACVFYTTYKNHDSDGDNFAYWVINTRQVAQLRRKLEMFTYARFDLELTFVITSTQEQPTVRGQDTPVLTHQIMYVPPGGPVPTKVNSYSWQTSTNPSVFWTEGSAPPRMSIPFIGIGNAYSMFYDGWARFDKQGTYGTSTLNNMGTLYMRHVNDGGPGPIVSTVRIYFKPKHVKTWVPRPPRLCQYQKAGNVNFEPTGVTEGRTDITTMKTTGAFGQQSGAVYVGNYRVVNIHLATRADWQNCVWEDYDRDLLVSTTTAHGCDTIARCDCTAGVYFCASRNKHYPVTFEGPGLVEVQESEYYPKKHQSHVLLAAGFAEPGDCGGILRCQHGVIGIVTMGGEGVVGFADVRDLLWLEDDAMEQGVRDYVEQLGNAFGSGFTNQICEQVTLLKESLIGQDSILEKSLKALVKIVSALVIVVRNHDDLITVTATLALIGCTTSPWRWLKQKVSQYYGIPMAERQNSGWLKKFTEMTNACKGMEWIAIKIQKFIEWLKVKILPEVKEKHEFLNRLKQLPLLESQIATIEQSAPSQSDQEQLFSNVQYFAHYCRKYAPLYAAEAKRVFSLEKKMSNYIQFKSKCRIEPVCLLLHGSPGAGKSVATNLIGRSLAEKLNSSVYSLPPDPDHFDGYKQQAVVIMDDLCQNPDGKDVSLFCQMVSSVDFVPPMAALEEKGILFTSPFVLASTNAGSVNAPTVSDSRALVRRFHFDMNIEVVSMYSQNGKINMPMAVKTCDEECCPVNFKKCCPLVCGKAIQFIDRRTQVRYSLDMLVTEMFREYNHRHSVGATLEALFQGPPVYREIKISVAPETPPPPAVADLLKSVDSEAVREYCKEKGWLIPEVDSTLQIEKHVNRAFICLQALTTFVSVAGIIYIIYKLFAGFQGAYTGMPNQKPKVPTLRQAKVQGPAFEFAVAMMKRNASTVKTEYGEFTMLGIYDRWAVLPRHAKPGPTILMNDQVVGVLDAKELVDKDGTNLELTLLKLNRNEKFRDIRGFLAREEVEANEAVLAINTSKFPNMYIPVGRVTDYGFLNLGGTPTKRMLMYNFPTRAGQCGGVLMSTGKVLGIHVGGNGHQGFSAALLRHYFNEEQGEIEFVESSKDAGFPVINTPSKTKLEPSVFHHVFEGNKEPAVLRNGDPRLKANFEEAIFSKYIGNVNTHVDEYMMEAVDYYAGQLATLDISTEPMKLEDAVYGTEGLEALDLTTSAGYPYVALGIKKRDILSKKTRDLTKLKECMDKYGLNLPMVTYVKDELRSADKVAKGKSRLIEASSLNDSVAMRQTFGNLYKTFHLNPGIVTGSAVGCDPDVFWSKIPVMLDGHLIAFDYSGYDASLSPVWFTCLKLLLEKLGYTNKETNYIDYLCNSHHLYRDKHYFVRGGMPSGCSGTSIFNSMINNIIIRTLMLKVYKGIDLDQFRMIAYGDDVIASYPWPIDASLLAEAGKGYGLIMTPADKGECFNEVTWTNVTFLKRYFRADEQYPFLVHPVMPMKDIHESIRWTKDPKNTQDHVRSLCLLAWHNGEHEYEEFIRKIRSVPVGRCLSLPAFSTLRRKWLDSF.

The N-myristoyl glycine; by host moiety is linked to residue G2. Over 2–1495 the chain is Cytoplasmic; sequence GAQVSTQKTG…HVNRAFICLQ (1494 aa). An amphipathic alpha-helix region spans residues 566–582; that stretch reads FFQGPPGEVVERAIARV. Residues H872 and D890 each act as for protease 2A activity in the active site. Residues C907 and C909 each coordinate Zn(2+). The active-site For protease 2A activity is the C961. The Zn(2+) site is built by C967 and H969. Residues 1101–1173 form a membrane-binding region; sequence NSGWLKKFTE…EQSAPSQSDQ (73 aa). The oligomerization stretch occupies residues 1101-1239; the sequence is NSGWLKKFTE…SPGAGKSVAT (139 aa). The segment at 1122 to 1126 is RNA-binding; it reads AIKIQ. Residues 1205 to 1361 enclose the SF3 helicase domain; the sequence is EKKMSNYIQF…SMYSQNGKIN (157 aa). C1369, C1381, and C1386 together coordinate Zn(2+). A C4-type; degenerate zinc finger spans residues 1369-1386; it reads CDEECCPVNFKKCCPLVC. Positions 1413–1420 are RNA-binding; sequence EYNHRHSV. The oligomerization stretch occupies residues 1424-1429; it reads LEALFQ. Residues 1496 to 1511 lie within the membrane without spanning it; the sequence is ALTTFVSVAGIIYIIY. At 1512 to 2185 the chain is on the cytoplasmic side; it reads KLFAGFQGAY…TLRRKWLDSF (674 aa). Position 1521 is an O-(5'-phospho-RNA)-tyrosine (Y1521). One can recognise a Peptidase C3 domain in the interval 1541-1719; that stretch reads GPAFEFAVAM…FSAALLRHYF (179 aa). Catalysis depends on for protease 3C activity residues H1580, E1611, and C1687. A RdRp catalytic domain is found at 1950-2066; it reads GHLIAFDYSG…SYPWPIDASL (117 aa). Residues D1956 and D2052 each coordinate Mg(2+).

It belongs to the picornaviruses polyprotein family. In terms of assembly, interacts with capsid protein VP1 and capsid protein VP3 to form heterotrimeric protomers. Interacts with capsid protein VP0, and capsid protein VP3 to form heterotrimeric protomers. Five protomers subsequently associate to form pentamers which serve as building blocks for the capsid. Interacts with capsid protein VP2, capsid protein VP3 and capsid protein VP4 following cleavage of capsid protein VP0. As to quaternary structure, interacts with capsid protein VP1 and capsid protein VP3 in the mature capsid. In terms of assembly, interacts with capsid protein VP0 and capsid protein VP1 to form heterotrimeric protomers. Five protomers subsequently associate to form pentamers which serve as building blocks for the capsid. Interacts with capsid protein VP4 in the mature capsid. Interacts with protein 2C; this interaction may be important for virion morphogenesis. Interacts with capsid protein VP1 and capsid protein VP3. As to quaternary structure, homodimer. In terms of assembly, homohexamer; forms a hexameric ring structure with 6-fold symmetry characteristic of AAA+ ATPases. Interacts (via N-terminus) with host RTN3 (via reticulon domain); this interaction is important for viral replication. Interacts with capsid protein VP3; this interaction may be important for virion morphogenesis. Interacts with protein 3CD. As to quaternary structure, homodimer. Interacts with host GBF1. Interacts (via GOLD domain) with host ACBD3 (via GOLD domain); this interaction allows the formation of a viral protein 3A/ACBD3 heterotetramer with a 2:2 stoichiometry, which will stimulate the recruitment of host PI4KB in order to synthesize PI4P at the viral RNA replication sites. In terms of assembly, interacts with RNA-directed RNA polymerase. Interacts with protein 3AB and with RNA-directed RNA polymerase. As to quaternary structure, interacts with Viral protein genome-linked and with protein 3CD. Mg(2+) is required as a cofactor. Specific enzymatic cleavages in vivo by the viral proteases yield processing intermediates and the mature proteins. In terms of processing, myristoylation is required for the formation of pentamers during virus assembly. Further assembly of 12 pentamers and a molecule of genomic RNA generates the provirion. Post-translationally, during virion maturation, immature virions are rendered infectious following cleavage of VP0 into VP4 and VP2. This maturation seems to be an autocatalytic event triggered by the presence of RNA in the capsid and it is followed by a conformational change infectious virion. Myristoylation is required during RNA encapsidation and formation of the mature virus particle. In terms of processing, VPg is uridylylated by the polymerase into VPg-pUpU. This acts as a nucleotide-peptide primer for the genomic RNA replication.

The protein localises to the virion. It is found in the host cytoplasm. It localises to the host cytoplasmic vesicle membrane. The protein resides in the host nucleus. It catalyses the reaction a ribonucleoside 5'-triphosphate + H2O = a ribonucleoside 5'-diphosphate + phosphate + H(+). It carries out the reaction Selective cleavage of Tyr-|-Gly bond in the picornavirus polyprotein.. The enzyme catalyses RNA(n) + a ribonucleoside 5'-triphosphate = RNA(n+1) + diphosphate. The catalysed reaction is Selective cleavage of Gln-|-Gly bond in the poliovirus polyprotein. In other picornavirus reactions Glu may be substituted for Gln, and Ser or Thr for Gly.. With respect to regulation, replication or transcription is subject to high level of random mutations by the nucleotide analog ribavirin. Its function is as follows. Forms an icosahedral capsid of pseudo T=3 symmetry with capsid proteins VP2 and VP3. The capsid is 300 Angstroms in diameter, composed of 60 copies of each capsid protein and enclosing the viral positive strand RNA genome. Capsid protein VP1 mainly forms the vertices of the capsid. Capsid protein VP1 interacts with host cell receptor to provide virion attachment to target host cells. This attachment induces virion internalization. Tyrosine kinases are probably involved in the entry process. After binding to its receptor, the capsid undergoes conformational changes. Capsid protein VP1 N-terminus (that contains an amphipathic alpha-helix) and capsid protein VP4 are externalized. Together, they shape a pore in the host membrane through which viral genome is translocated to host cell cytoplasm. In terms of biological role, forms an icosahedral capsid of pseudo T=3 symmetry with capsid proteins VP2 and VP3. The capsid is 300 Angstroms in diameter, composed of 60 copies of each capsid protein and enclosing the viral positive strand RNA genome. Lies on the inner surface of the capsid shell. After binding to the host receptor, the capsid undergoes conformational changes. Capsid protein VP4 is released, Capsid protein VP1 N-terminus is externalized, and together, they shape a pore in the host membrane through which the viral genome is translocated into the host cell cytoplasm. Functionally, component of immature procapsids, which is cleaved into capsid proteins VP4 and VP2 after maturation. Allows the capsid to remain inactive before the maturation step. Its function is as follows. Cysteine protease that cleaves viral polyprotein and specific host proteins. It is responsible for the autocatalytic cleavage between the P1 and P2 regions, which is the first cleavage occurring in the polyprotein. Also cleaves the host translation initiation factor EIF4G1, in order to shut down the capped cellular mRNA translation. Inhibits the host nucleus-cytoplasm protein and RNA trafficking by cleaving host members of the nuclear pores. Counteracts stress granule formation probably by antagonizing its assembly or promoting its dissassembly. In terms of biological role, plays an essential role in the virus replication cycle by acting as a viroporin. Creates a pore in the host endoplasmic reticulum and as a consequence releases Ca2+ in the cytoplasm of infected cell. In turn, high levels of cytoplasmic calcium may trigger membrane trafficking and transport of viral ER-associated proteins to viroplasms, sites of viral genome replication. Induces and associates with structural rearrangements of intracellular membranes. Displays RNA-binding, nucleotide binding and NTPase activities. May play a role in virion morphogenesis and viral RNA encapsidation by interacting with the capsid protein VP3. Functionally, localizes the viral replication complex to the surface of membranous vesicles. Together with protein 3CD binds the Cis-Active RNA Element (CRE) which is involved in RNA synthesis initiation. Acts as a cofactor to stimulate the activity of 3D polymerase, maybe through a nucleid acid chaperone activity. Its function is as follows. Localizes the viral replication complex to the surface of membranous vesicles. It inhibits host cell endoplasmic reticulum-to-Golgi apparatus transport and causes the disassembly of the Golgi complex, possibly through GBF1 interaction. This would result in depletion of MHC, trail receptors and IFN receptors at the host cell surface. Plays an essential role in viral RNA replication by recruiting ACBD3 and PI4KB at the viral replication sites, thereby allowing the formation of the rearranged membranous structures where viral replication takes place. In terms of biological role, acts as a primer for viral RNA replication and remains covalently bound to viral genomic RNA. VPg is uridylylated prior to priming replication into VPg-pUpU. The oriI viral genomic sequence may act as a template for this. The VPg-pUpU is then used as primer on the genomic RNA poly(A) by the RNA-dependent RNA polymerase to replicate the viral genome. During genome replication, the VPg-RNA linkage is removed by the host TDP2, thereby accelerating replication. During the late stage of the replication cycle, host TDP2 is excluded from sites of viral RNA synthesis and encapsidation, allowing for the generation of progeny virions. Involved in the viral replication complex and viral polypeptide maturation. It exhibits protease activity with a specificity and catalytic efficiency that is different from protease 3C. Protein 3CD lacks polymerase activity. Protein 3CD binds to the 5'UTR of the viral genome. Functionally, major viral protease that mediates proteolytic processing of the polyprotein. Cleaves host EIF5B, contributing to host translation shutoff. Also cleaves host PABPC1, contributing to host translation shutoff. Cleaves host NLRP1, triggers host N-glycine-mediated degradation of the autoinhibitory NLRP1 N-terminal fragment. Its function is as follows. Replicates the viral genomic RNA on the surface of intracellular membranes. May form linear arrays of subunits that propagate along a strong head-to-tail interaction called interface-I. Covalently attaches UMP to a tyrosine of VPg, which is used to prime RNA synthesis. The positive stranded RNA genome is first replicated at virus induced membranous vesicles, creating a dsRNA genomic replication form. This dsRNA is then used as template to synthesize positive stranded RNA genomes. ss(+)RNA genomes are either translated, replicated or encapsidated. The chain is Genome polyprotein from Swine vesicular disease virus (strain H/3 '76) (SVDV).